Reading from the N-terminus, the 151-residue chain is MKYSKPKSKSILSLDIGTKRIGLAYCDSLFITVNILPALRREKNKNEFKTIKSHIKKLNLTGFIVGLPLDDKGRMTSQAFDCKTYGEYLFNELKLPFSFVNEHSSTWESENRFGVKKDKSGLIDSLSAKVILEQWIQEGPELKELMGNKQI.

Belongs to the YqgF nuclease family.

The protein resides in the cytoplasm. Could be a nuclease involved in processing of the 5'-end of pre-16S rRNA. The protein is Putative pre-16S rRNA nuclease of Prochlorococcus marinus (strain MIT 9515).